Consider the following 874-residue polypeptide: Alanine--tRNA ligase (874 aa).

The Zn(2+) site is built by H562, H566, C664, and H668.

This sequence belongs to the class-II aminoacyl-tRNA synthetase family. Zn(2+) serves as cofactor.

The protein resides in the cytoplasm. It carries out the reaction tRNA(Ala) + L-alanine + ATP = L-alanyl-tRNA(Ala) + AMP + diphosphate. Catalyzes the attachment of alanine to tRNA(Ala) in a two-step reaction: alanine is first activated by ATP to form Ala-AMP and then transferred to the acceptor end of tRNA(Ala). Also edits incorrectly charged Ser-tRNA(Ala) and Gly-tRNA(Ala) via its editing domain. The protein is Alanine--tRNA ligase of Shewanella sp. (strain ANA-3).